Here is a 361-residue protein sequence, read N- to C-terminus: 3-dehydroquinate synthase (361 aa).

Belongs to the archaeal-type DHQ synthase family.

It catalyses the reaction 2-amino-2,3,7-trideoxy-D-lyxo-hept-6-ulosonate + NAD(+) + H2O = 3-dehydroquinate + NH4(+) + NADH + H(+). Its function is as follows. Catalyzes the oxidative deamination and cyclization of 2-amino-3,7-dideoxy-D-threo-hept-6-ulosonic acid (ADH) to yield 3-dehydroquinate (DHQ), which is fed into the canonical shikimic pathway of aromatic amino acid biosynthesis. The polypeptide is 3-dehydroquinate synthase (Methanococcus maripaludis (strain DSM 14266 / JCM 13030 / NBRC 101832 / S2 / LL)).